The primary structure comprises 309 residues: MGHSATDLNETRILLYYCFTPIDDPTAVMLWQRALCEQLELKGRILISKHGINGTVGGSLASCKQYVRRTREFPGFKKMEFKWSAGSADDFPRLSVKVREEIVAFGAPDELKVDENGVIGGGVHLKPEEVNKLVEERGDEVVFFDGRNAMEAEIGKFKNAIVPDVRTTHDFISEIESGKYDDLKDKPVVTYCTGGIRCEILSSLMKNRGFEEVYQIDGGIVRYGEKYGDKGLWEGSLYVFDGRMHMEFSDDAATLGRCRACGHATNDFHNCVNEQCREQILLCEECAADPESATCGRKECAEVAAEMVG.

Residues 137-232 (RGDEVVFFDG…YGEKYGDKGL (96 aa)) form the Rhodanese domain. Cysteine 192 serves as the catalytic Cysteine persulfide intermediate.

Belongs to the TrhO family.

It carries out the reaction uridine(34) in tRNA + AH2 + O2 = 5-hydroxyuridine(34) in tRNA + A + H2O. Catalyzes oxygen-dependent 5-hydroxyuridine (ho5U) modification at position 34 in tRNAs. This Corynebacterium jeikeium (strain K411) protein is tRNA uridine(34) hydroxylase.